The chain runs to 87 residues: Homeotic protein ultrabithorax (87 aa).

The short motif at 22–27 (FYPWMA) is the Antp-type hexapeptide element.

This sequence belongs to the Antp homeobox family. As to expression, in the embryo, expression is seen in the epidermis, somatic and visceral mesoderm, and the peripheral and central nervous system.

The protein resides in the nucleus. Sequence-specific transcription factor which is part of a developmental regulatory system that provides cells with specific positional identities on the anterior-posterior axis. Binds the consensus region 5'-TTAAT[GT][GA]-3'. This homeotic protein controls development of the cells in the posterior thoracic and first abdominal segments. It activates the synthesis of the decapentaplegic (DPP) growth factor. The chain is Homeotic protein ultrabithorax (Ubx) from Drosophila hydei (Fruit fly).